We begin with the raw amino-acid sequence, 315 residues long: Thymidylate synthase (315 aa).

DUMP is bound by residues Arg29 and 156–157 (RR). Cys176 (nucleophile) is an active-site residue. DUMP-binding positions include 213-216 (RSCD), Asn224, and 254-256 (HVY). Asp216 is a binding site for (6R)-5,10-methylene-5,6,7,8-tetrahydrofolate.

Belongs to the thymidylate synthase family. In terms of assembly, homodimer.

The enzyme catalyses dUMP + (6R)-5,10-methylene-5,6,7,8-tetrahydrofolate = 7,8-dihydrofolate + dTMP. It participates in pyrimidine metabolism; dTTP biosynthesis. The polypeptide is Thymidylate synthase (TMP1) (Candida albicans (strain SC5314 / ATCC MYA-2876) (Yeast)).